The following is a 413-amino-acid chain: uncharacterized protein (413 aa).

The protein belongs to the mycobacterial PPE family.

This is an uncharacterized protein from Mycobacterium tuberculosis (strain CDC 1551 / Oshkosh).